A 930-amino-acid chain; its full sequence is Isoleucine--tRNA ligase (930 aa).

The short motif at proline 57–histidine 67 is the 'HIGH' region element. Glutamate 554 serves as a coordination point for L-isoleucyl-5'-AMP. Positions lysine 595–serine 599 match the 'KMSKS' region motif. Lysine 598 provides a ligand contact to ATP. Zn(2+)-binding residues include cysteine 888, cysteine 891, cysteine 908, and cysteine 911.

Belongs to the class-I aminoacyl-tRNA synthetase family. IleS type 1 subfamily. In terms of assembly, monomer. Zn(2+) serves as cofactor.

It localises to the cytoplasm. The enzyme catalyses tRNA(Ile) + L-isoleucine + ATP = L-isoleucyl-tRNA(Ile) + AMP + diphosphate. Functionally, catalyzes the attachment of isoleucine to tRNA(Ile). As IleRS can inadvertently accommodate and process structurally similar amino acids such as valine, to avoid such errors it has two additional distinct tRNA(Ile)-dependent editing activities. One activity is designated as 'pretransfer' editing and involves the hydrolysis of activated Val-AMP. The other activity is designated 'posttransfer' editing and involves deacylation of mischarged Val-tRNA(Ile). This Streptococcus pneumoniae serotype 19F (strain G54) protein is Isoleucine--tRNA ligase.